The following is a 124-amino-acid chain: Small ribosomal subunit protein uS12 (124 aa).

The interval 1–32 (MPTIQQLVRKGRKDKATKTKTPALKGSPQRRG) is disordered. Residue Asp89 is modified to 3-methylthioaspartic acid. Residues 105–124 (QGVRGRQQARSRYGAKKEKK) form a disordered region. Basic residues predominate over residues 111–124 (QQARSRYGAKKEKK).

The protein belongs to the universal ribosomal protein uS12 family. Part of the 30S ribosomal subunit. Contacts proteins S8 and S17. May interact with IF1 in the 30S initiation complex.

Functionally, with S4 and S5 plays an important role in translational accuracy. Its function is as follows. Interacts with and stabilizes bases of the 16S rRNA that are involved in tRNA selection in the A site and with the mRNA backbone. Located at the interface of the 30S and 50S subunits, it traverses the body of the 30S subunit contacting proteins on the other side and probably holding the rRNA structure together. The combined cluster of proteins S8, S12 and S17 appears to hold together the shoulder and platform of the 30S subunit. In Beutenbergia cavernae (strain ATCC BAA-8 / DSM 12333 / CCUG 43141 / JCM 11478 / NBRC 16432 / NCIMB 13614 / HKI 0122), this protein is Small ribosomal subunit protein uS12.